The primary structure comprises 108 residues: Thaicobrin (108 aa).

The region spanning 1–108 is the B30.2/SPRY domain; sequence SPPGNWQKAD…IWQKGLWWLG (108 aa).

Belongs to the ohanin/vespryn family. In terms of tissue distribution, expressed by the venom gland.

It is found in the secreted. Functionally, neurotoxin that produces dose-dependent hypolocomotion and hyperalgesia in mice. May directly act on the central nervous system, as it is 6500-fold more potent when administered intracerebroventricularly than intraperitoneal. The polypeptide is Thaicobrin (Naja kaouthia (Monocled cobra)).